We begin with the raw amino-acid sequence, 750 residues long: 5-methyltetrahydropteroyltriglutamate--homocysteine methyltransferase (750 aa).

5-methyltetrahydropteroyltri-L-glutamate is bound by residues 15–18 (RELK) and Lys-114. Residues 425 to 427 (IGS) and Glu-478 each bind L-homocysteine. Residues 425 to 427 (IGS) and Glu-478 each bind L-methionine. Trp-555 contributes to the 5-methyltetrahydropteroyltri-L-glutamate binding site. Residue Asp-593 participates in L-homocysteine binding. Residue Asp-593 participates in L-methionine binding. A 5-methyltetrahydropteroyltri-L-glutamate-binding site is contributed by Glu-599. Positions 636, 638, and 660 each coordinate Zn(2+). The active-site Proton donor is the His-689. A Zn(2+)-binding site is contributed by Cys-721.

Belongs to the vitamin-B12 independent methionine synthase family. It depends on Zn(2+) as a cofactor.

The catalysed reaction is 5-methyltetrahydropteroyltri-L-glutamate + L-homocysteine = tetrahydropteroyltri-L-glutamate + L-methionine. The protein operates within amino-acid biosynthesis; L-methionine biosynthesis via de novo pathway; L-methionine from L-homocysteine (MetE route): step 1/1. Functionally, catalyzes the transfer of a methyl group from 5-methyltetrahydrofolate to homocysteine resulting in methionine formation. This Streptococcus sanguinis (strain SK36) protein is 5-methyltetrahydropteroyltriglutamate--homocysteine methyltransferase.